Here is a 195-residue protein sequence, read N- to C-terminus: Adenylate kinase (195 aa).

Position 8 to 16 (8 to 16) interacts with ATP; sequence GIPGVGKTT.

This sequence belongs to the archaeal adenylate kinase family. In terms of assembly, homotrimer.

Its subcellular location is the cytoplasm. It catalyses the reaction AMP + ATP = 2 ADP. The sequence is that of Adenylate kinase (adkA) from Saccharolobus solfataricus (strain ATCC 35092 / DSM 1617 / JCM 11322 / P2) (Sulfolobus solfataricus).